A 1873-amino-acid polypeptide reads, in one-letter code: Girdin (1873 aa).

The Calponin-homology (CH) domain maps to 12-132; the sequence is QFMTSPLVTW…KLLLLLLGCA (121 aa). A coiled-coil region spans residues 196 to 425; that stretch reads HLRRLIDERD…EMAQKQSMDE (230 aa). A phosphoserine mark is found at Ser-233, Ser-237, and Ser-449. Coiled-coil stretches lie at residues 458 to 1232 and 1268 to 1385; these read TSSK…ESKN and HKNL…KFYD. 2 disordered regions span residues 816 to 841 and 1013 to 1034; these read ENKS…NKRL and EERM…GRES. Phosphoserine is present on Ser-1020. The residue at position 1387 (Ser-1387) is a Phosphoserine. The tract at residues 1390 to 1408 is phosphoinositide-binding; the sequence is RRRGNWITLKMRKLIKSKK. The segment covering 1407–1416 has biased composition (basic and acidic residues); that stretch reads KKDINRERQK. Disordered regions lie at residues 1407–1459, 1560–1602, and 1616–1643; these read KKDI…LGTK, TTSF…SNNN, and QSRP…GSSP. At Ser-1417 the chain carries Phosphoserine; by PKB/AKT1. Composition is skewed to polar residues over residues 1417-1430, 1445-1459, 1560-1579, and 1616-1626; these read SLTL…SSEG, VGSN…LGTK, TTSF…STGS, and QSRPQSHSSGD. At Thr-1421 the chain carries Phosphothreonine. The short motif at 1674–1704 is the GBA element; sequence KAGSPGSEVVTLQQFLEESNKLTSIQLKSSS. A phosphoserine mark is found at Ser-1677, Ser-1692, and Ser-1719. The segment at 1715–1825 is SH2-like; required for interaction with growth factor receptors; the sequence is SLSVSSDFLG…GTTRRTSIHD (111 aa). The segment at 1738 to 1873 is disordered; the sequence is SGKTPGDFYD…KSRSREQQSS (136 aa). Over residues 1745 to 1755 the composition is skewed to basic and acidic residues; it reads FYDRRTTKPEF. Residue Tyr-1767 is modified to Phosphotyrosine. Polar residues-rich tracts occupy residues 1768–1781, 1789–1801, and 1809–1820; these read TISS…STQG, TSVS…SNPY, and SVISTAEGTTRR. Residue Tyr-1801 is modified to Phosphotyrosine. Phosphoserine is present on residues Ser-1822 and Ser-1839. Basic and acidic residues predominate over residues 1822 to 1832; the sequence is SIHDFLSKDSR. Residues 1839 to 1852 are compositionally biased toward low complexity; the sequence is SSPPTAGSSSTTAS. The segment covering 1858–1873 has biased composition (basic and acidic residues); it reads QESRNSKSRSREQQSS.

This sequence belongs to the CCDC88 family. As to quaternary structure, homodimer. Interacts (via GBA motif) with guanine nucleotide-binding protein G(i) alpha subunits GNAI1, GNAI2 and GNAI3. Also interacts (via GNA motif) with guanine nucleotide-binding protein G(s) alpha subunit GNAS. Interaction with G(i) alpha subunits occurs before interaction with GNAS and is regulated by phosphorylation; phosphorylation at Ser-1677 enhances binding to G(i) alpha subunits while phosphorylation at Ser-1692 abolishes G(i) alpha subunit binding, promoting binding to GNAS. Interacts (via C-terminal SH2-like region) with growth factor receptors EGFR, INSR and KDR/VEGFR2 (via their autophosphorylated cytoplasmic tails). Forms a complex with EGFR and GNAI3 which leads to enhanced EGFR signaling and triggering of cell migration; ligand stimulation is required for recruitment of GNAI3 to the complex. Interacts (tyrosine-phosphorylated form) with phosphatidylinositol 3-kinase (PI3K) regulatory subunit PIK3R1/p85a (via SH2 domains); the interaction enables recruitment of PIK3R1 to the EGFR receptor, enhancing PI3K activity and cell migration. Interacts with serine/threonine-protein kinase PRKCQ; the interaction leads to phosphorylation of CCDC88A and inhibition of its guanine nucleotide exchange factor activity. Interacts (via C-terminus) with DISC1; the interaction is direct. Interacts with AKT proteins; the interaction is inhibited in the presence of DISC1. Interacts with AKT1/PKB (via C-terminus). The non-phosphorylated form interacts with phosphatidylinositol 4-phosphate [Pi(4)P] and weakly with phosphatidylinositol 3-phosphate [Pi(3)P]. Interacts with microtubules. Interacts with actin. Post-translationally, phosphorylation is induced by epidermal growth factor (EGF) in a phosphoinositide 3-kinase (PI3K)-dependent manner. Phosphorylation by AKT1/PKB is necessary for the delocalization from the cell membrane and for cell migration. Phosphorylated on tyrosine residues which promotes binding to phosphatidylinositol 3-kinase (PI3K) regulatory subunit PIK3R1/p85a and enhances PI3K activity. Tyrosine-phosphorylated by both receptor and non-receptor tyrosine kinases in vitro. Tyrosine phosphorylation is required for AKT1-dependent phosphorylation of Ser-1417. Phosphorylation at Ser-1692 by PRKCQ disrupts interaction with GNAI3 and inhibits guanine nucleotide exchange factor activity. Expressed in the dentate gyrus, pyramidal cell layer of hippocampal regions CA1 and CA3 at postnatal 15. Expressed highly in neurons. Weakly in neuron progenitors (at protein level). Expressed in the dentate granule cell layer of the hippocampus. Expressed highly in the adult testis, moderately in the brain and at a low level in the spleen, lungs and fat.

It is found in the cell membrane. Its subcellular location is the cytoplasm. It localises to the cytosol. The protein resides in the cytoplasmic vesicle. The protein localises to the cell projection. It is found in the lamellipodium. Its subcellular location is the cytoskeleton. It localises to the cilium basal body. The protein resides in the microtubule organizing center. The protein localises to the centrosome. It is found in the centriole. In terms of biological role, bifunctional modulator of guanine nucleotide-binding proteins (G proteins). Acts as a non-receptor guanine nucleotide exchange factor which binds to and activates guanine nucleotide-binding protein G(i) alpha subunits. Also acts as a guanine nucleotide dissociation inhibitor for guanine nucleotide-binding protein G(s) subunit alpha GNAS. Essential for cell migration. Interacts in complex with G(i) alpha subunits with the EGFR receptor, retaining EGFR at the cell membrane following ligand stimulation and promoting EGFR signaling which triggers cell migration. Binding to Gi-alpha subunits displaces the beta and gamma subunits from the heterotrimeric G-protein complex which enhances phosphoinositide 3-kinase (PI3K)-dependent phosphorylation and kinase activity of AKT1/PKB. Phosphorylation of AKT1/PKB induces the phosphorylation of downstream effectors GSK3 and FOXO1/FKHR, and regulates DNA replication and cell proliferation. Binds in its tyrosine-phosphorylated form to the phosphatidylinositol 3-kinase (PI3K) regulatory subunit PIK3R1 which enables recruitment of PIK3R1 to the EGFR receptor, enhancing PI3K activity and cell migration. Plays a role as a key modulator of the AKT-mTOR signaling pathway, controlling the tempo of the process of newborn neuron integration during adult neurogenesis, including correct neuron positioning, dendritic development and synapse formation. Inhibition of G(s) subunit alpha GNAS leads to reduced cellular levels of cAMP and suppression of cell proliferation. Essential for the integrity of the actin cytoskeleton. Required for formation of actin stress fibers and lamellipodia. May be involved in membrane sorting in the early endosome. Plays a role in ciliogenesis and cilium morphology and positioning and this may partly be through regulation of the localization of scaffolding protein CROCC/Rootletin. The protein is Girdin (Ccdc88a) of Mus musculus (Mouse).